Here is a 134-residue protein sequence, read N- to C-terminus: Large ribosomal subunit protein eL32 (134 aa).

This sequence belongs to the eukaryotic ribosomal protein eL32 family.

This is Large ribosomal subunit protein eL32 (RpL32) from Drosophila bifasciata (Fruit fly).